We begin with the raw amino-acid sequence, 166 residues long: ATP synthase subunit b (166 aa).

A helical membrane pass occupies residues 10–30; it reads LLFWMVIVFGIVFVILAKYGF.

The protein belongs to the ATPase B chain family. In terms of assembly, F-type ATPases have 2 components, F(1) - the catalytic core - and F(0) - the membrane proton channel. F(1) has five subunits: alpha(3), beta(3), gamma(1), delta(1), epsilon(1). F(0) has three main subunits: a(1), b(2) and c(10-14). The alpha and beta chains form an alternating ring which encloses part of the gamma chain. F(1) is attached to F(0) by a central stalk formed by the gamma and epsilon chains, while a peripheral stalk is formed by the delta and b chains.

Its subcellular location is the cell inner membrane. Functionally, f(1)F(0) ATP synthase produces ATP from ADP in the presence of a proton or sodium gradient. F-type ATPases consist of two structural domains, F(1) containing the extramembraneous catalytic core and F(0) containing the membrane proton channel, linked together by a central stalk and a peripheral stalk. During catalysis, ATP synthesis in the catalytic domain of F(1) is coupled via a rotary mechanism of the central stalk subunits to proton translocation. In terms of biological role, component of the F(0) channel, it forms part of the peripheral stalk, linking F(1) to F(0). The polypeptide is ATP synthase subunit b (Phocaeicola vulgatus (strain ATCC 8482 / DSM 1447 / JCM 5826 / CCUG 4940 / NBRC 14291 / NCTC 11154) (Bacteroides vulgatus)).